A 122-amino-acid chain; its full sequence is Small ribosomal subunit protein uS13 (122 aa).

The tract at residues 95 to 122 (GLPVRGQRTHTNARTRKGPAKSIAGKKK) is disordered.

This sequence belongs to the universal ribosomal protein uS13 family. In terms of assembly, part of the 30S ribosomal subunit. Forms a loose heterodimer with protein S19. Forms two bridges to the 50S subunit in the 70S ribosome.

Functionally, located at the top of the head of the 30S subunit, it contacts several helices of the 16S rRNA. In the 70S ribosome it contacts the 23S rRNA (bridge B1a) and protein L5 of the 50S subunit (bridge B1b), connecting the 2 subunits; these bridges are implicated in subunit movement. Contacts the tRNAs in the A and P-sites. The protein is Small ribosomal subunit protein uS13 of Nitrobacter hamburgensis (strain DSM 10229 / NCIMB 13809 / X14).